The chain runs to 180 residues: MSKKSNKSLAFSLLGLIVSMVLLSFAAVPLYNLFCKVTGYGGTTNRETVSIYSKVKGTRPIIIEFDANVDKNLPWRFIPRQQRVQIVPGQNTLVFYETENLSDNDIIGTSIYNVTPNKAGKYFVKIHCFCFEEQLLKAGEKVLMPVTFYIDKDFENDPEMRDVKVLTLSYSFFKVRDVKK.

Residues 1–8 (MSKKSNKS) are Cytoplasmic-facing. A helical; Signal-anchor for type II membrane protein membrane pass occupies residues 9-29 (LAFSLLGLIVSMVLLSFAAVP). Over 30–180 (LYNLFCKVTG…SFFKVRDVKK (151 aa)) the chain is Periplasmic.

Belongs to the COX11/CtaG family.

The protein localises to the cell inner membrane. Functionally, exerts its effect at some terminal stage of cytochrome c oxidase synthesis, probably by being involved in the insertion of the copper B into subunit I. The chain is Cytochrome c oxidase assembly protein CtaG from Rickettsia bellii (strain RML369-C).